Reading from the N-terminus, the 249-residue chain is Diaminopimelate epimerase (249 aa).

Substrate is bound by residues N11 and N60. Residue C69 is the Proton donor of the active site. Substrate is bound by residues 70 to 71, N164, and 182 to 183; these read GN and ER. Catalysis depends on C192, which acts as the Proton acceptor. 193–194 lines the substrate pocket; the sequence is GT.

Belongs to the diaminopimelate epimerase family. As to quaternary structure, homodimer.

The protein resides in the cytoplasm. The enzyme catalyses (2S,6S)-2,6-diaminopimelate = meso-2,6-diaminopimelate. It functions in the pathway amino-acid biosynthesis; L-lysine biosynthesis via DAP pathway; DL-2,6-diaminopimelate from LL-2,6-diaminopimelate: step 1/1. Its function is as follows. Catalyzes the stereoinversion of LL-2,6-diaminopimelate (L,L-DAP) to meso-diaminopimelate (meso-DAP), a precursor of L-lysine and an essential component of the bacterial peptidoglycan. The sequence is that of Diaminopimelate epimerase from Campylobacter jejuni subsp. jejuni serotype O:2 (strain ATCC 700819 / NCTC 11168).